Reading from the N-terminus, the 672-residue chain is Protein OS-9 (672 aa).

The signal sequence occupies residues 1–26 (MAAEVLLSSLLGLLFLGLLLPARLTG). The MRH domain maps to 108 to 230 (APCLLKTKDW…TIRTSRLCPH (123 aa)). C110 and C123 are joined by a disulfide. A mannooligosaccharide derivative is bound by residues W117, W118, and Q130. An N-linked (GlcNAc...) asparagine glycan is attached at N177. 2 disulfides stabilise this stretch: C181–C216 and C196–C228. A mannooligosaccharide derivative contacts are provided by D182, R188, E212, and Y218. Disordered stretches follow at residues 261–355 (RQAE…NVQV), 372–452 (KAAE…LLPS), 511–548 (ENQS…RVRV), and 637–672 (EANK…EFDF). Composition is skewed to basic and acidic residues over residues 263–281 (AESK…DTDR), 294–310 (PKKE…ESEL), 320–338 (AAAR…HEAA), 372–386 (KAAE…REQP), and 394–409 (PQRE…KDGE). The span at 414 to 435 (MEEEDGDDEEEEEEEEEDEEEQ) shows a compositional bias: acidic residues. Residues 637–652 (EANKERQRQSELESNY) are compositionally biased toward basic and acidic residues. A compositionally biased stretch (acidic residues) spans 663-672 (DTGDLDEFDF).

The protein belongs to the OS-9 family. As to quaternary structure, component of the HRD1 complex, which comprises at least SYNV1/HRD1, DERL1/2, FAM8A1, HERPUD1/HERP, OS9, SEL1L and UBE2J1. FAM8A1 is stabilized by interaction with SYNV1, which prevents its proteasomal degradation. OS9 and UBE2J1 recruitment to the complex may be mediated by SEL1L. Through this complex, may interact with ERLEC1 and HSPA5. Interacts (via C-terminus) with CPNE6 (via second C2 domain); this interaction occurs in a calcium-dependent manner in vitro. Interacts with CREB3. In terms of processing, N-glycosylated. Intramolecular disulfide bonds.

It localises to the endoplasmic reticulum lumen. Functionally, lectin component of the HRD1 complex, which functions in endoplasmic reticulum (ER) quality control and ER-associated degradation (ERAD). Specifically recognizes and binds improperly folded glycoproteins as well as hyperglycosylated proteins, retain them in the ER, and transfers them to the ubiquitination machinery and promote their degradation. Possible targets include TRPV4 as well as hyperglycosylated HSP90B1. In Mus musculus (Mouse), this protein is Protein OS-9 (Os9).